A 548-amino-acid polypeptide reads, in one-letter code: Chaperonin GroEL (548 aa).

ATP contacts are provided by residues 30 to 33 (TLGP), Lys-51, 87 to 91 (DGTTT), Gly-415, 478 to 480 (NAA), and Asp-494.

Belongs to the chaperonin (HSP60) family. As to quaternary structure, forms a cylinder of 14 subunits composed of two heptameric rings stacked back-to-back. Interacts with the co-chaperonin GroES.

Its subcellular location is the cytoplasm. It carries out the reaction ATP + H2O + a folded polypeptide = ADP + phosphate + an unfolded polypeptide.. Functionally, together with its co-chaperonin GroES, plays an essential role in assisting protein folding. The GroEL-GroES system forms a nano-cage that allows encapsulation of the non-native substrate proteins and provides a physical environment optimized to promote and accelerate protein folding. This is Chaperonin GroEL from Trichlorobacter lovleyi (strain ATCC BAA-1151 / DSM 17278 / SZ) (Geobacter lovleyi).